A 652-amino-acid polypeptide reads, in one-letter code: tRNA 5-methylaminomethyl-2-thiouridine biosynthesis bifunctional protein MnmC (652 aa).

The segment at 1-235 (MPDRLVPATL…EPALRVGEYA (235 aa)) is tRNA (mnm(5)s(2)U34)-methyltransferase. The tract at residues 259-652 (IGAGLAGCAV…IRALRGRQIG (394 aa)) is FAD-dependent cmnm(5)s(2)U34 oxidoreductase.

The protein in the N-terminal section; belongs to the methyltransferase superfamily. tRNA (mnm(5)s(2)U34)-methyltransferase family. This sequence in the C-terminal section; belongs to the DAO family. It depends on FAD as a cofactor.

It is found in the cytoplasm. It catalyses the reaction 5-aminomethyl-2-thiouridine(34) in tRNA + S-adenosyl-L-methionine = 5-methylaminomethyl-2-thiouridine(34) in tRNA + S-adenosyl-L-homocysteine + H(+). Functionally, catalyzes the last two steps in the biosynthesis of 5-methylaminomethyl-2-thiouridine (mnm(5)s(2)U) at the wobble position (U34) in tRNA. Catalyzes the FAD-dependent demodification of cmnm(5)s(2)U34 to nm(5)s(2)U34, followed by the transfer of a methyl group from S-adenosyl-L-methionine to nm(5)s(2)U34, to form mnm(5)s(2)U34. This is tRNA 5-methylaminomethyl-2-thiouridine biosynthesis bifunctional protein MnmC from Burkholderia ambifaria (strain MC40-6).